We begin with the raw amino-acid sequence, 210 residues long: Large ribosomal subunit protein uL3 (210 aa).

Residues 119–143 (GYQGNIKKDGQSRGPMAHGSRYHRR) are disordered.

The protein belongs to the universal ribosomal protein uL3 family. As to quaternary structure, part of the 50S ribosomal subunit. Forms a cluster with proteins L14 and L19.

In terms of biological role, one of the primary rRNA binding proteins, it binds directly near the 3'-end of the 23S rRNA, where it nucleates assembly of the 50S subunit. The chain is Large ribosomal subunit protein uL3 from Lacticaseibacillus casei (strain BL23) (Lactobacillus casei).